The following is a 408-amino-acid chain: L,D-transpeptidase 2 (408 aa).

An N-terminal signal peptide occupies residues 1-34; sequence MPKVGIAAQAGRTRVRRAWLTALMMTAVMIGAVA. The N-palmitoyl cysteine moiety is linked to residue cysteine 35. Cysteine 35 carries S-diacylglycerol cysteine lipidation. Residues aspartate 232, glutamate 235, and glycine 236 each contribute to the Ca(2+) site. One can recognise a L,D-TPase catalytic domain in the interval 253 to 378; that stretch reads VIATADDNTK…VKRGDIVEVV (126 aa). Substrate is bound by residues tyrosine 318 and 331-332; that span reads SG. The active-site Proton donor/acceptor is the histidine 336. Cysteine 354 acts as the Nucleophile in catalysis. Asparagine 356 contributes to the substrate binding site.

As to quaternary structure, monomer.

The protein resides in the cell membrane. The protein operates within cell wall biogenesis; peptidoglycan biosynthesis. With respect to regulation, is irreversibly inactivated by the beta-lactams carbapenems via the formation of a covalent adduct resulting from acylation of the catalytic Cys. Functionally, generates 3-&gt;3 cross-links in peptidoglycan, catalyzing the cleavage of the mDap(3)-D-Ala(4) bond of a tetrapeptide donor stem and the formation of a bond between the carbonyl of mDap(3) of the donor stem and the side chain of mDap(3) of the acceptor stem. Is specific for donor substrates containing a stem tetrapeptide since it cannot use pentapeptide stems. Is essential for virulence in a mouse model of acute infection. This is L,D-transpeptidase 2 (ldtB) from Mycobacterium tuberculosis (strain CDC 1551 / Oshkosh).